We begin with the raw amino-acid sequence, 238 residues long: Ribosomal RNA small subunit methyltransferase G (238 aa).

S-adenosyl-L-methionine contacts are provided by residues Gly77, Phe82, Ala128–Glu129, and Arg147.

It belongs to the methyltransferase superfamily. RNA methyltransferase RsmG family.

It localises to the cytoplasm. Functionally, specifically methylates the N7 position of guanine in position 535 of 16S rRNA. In Listeria monocytogenes serotype 4b (strain F2365), this protein is Ribosomal RNA small subunit methyltransferase G.